The following is a 374-amino-acid chain: Putative heme chaperone HemW-like protein (374 aa).

The 231-residue stretch at 1-231 (MKLLGLYINI…EKLLKKSGYK (231 aa)) folds into the Radical SAM core domain.

This sequence belongs to the anaerobic coproporphyrinogen-III oxidase family. HemW subfamily.

The protein localises to the cytoplasm. Its function is as follows. Might be a heme chaperone; in E.coli heme binds independently of binding to [4Fe-4S] or S-adenosyl-L-methionine. The polypeptide is Putative heme chaperone HemW-like protein (Buchnera aphidicola subsp. Baizongia pistaciae (strain Bp)).